Consider the following 188-residue polypeptide: Elongation factor P (188 aa).

At lysine 34 the chain carries N6-(3,6-diaminohexanoyl)-5-hydroxylysine.

This sequence belongs to the elongation factor P family. May be beta-lysylated on the epsilon-amino group of Lys-34 by the combined action of EpmA and EpmB, and then hydroxylated on the C5 position of the same residue by EpmC (if this protein is present). Lysylation is critical for the stimulatory effect of EF-P on peptide-bond formation. The lysylation moiety may extend toward the peptidyltransferase center and stabilize the terminal 3-CCA end of the tRNA. Hydroxylation of the C5 position on Lys-34 may allow additional potential stabilizing hydrogen-bond interactions with the P-tRNA.

It is found in the cytoplasm. Its pathway is protein biosynthesis; polypeptide chain elongation. Its function is as follows. Involved in peptide bond synthesis. Alleviates ribosome stalling that occurs when 3 or more consecutive Pro residues or the sequence PPG is present in a protein, possibly by augmenting the peptidyl transferase activity of the ribosome. Modification of Lys-34 is required for alleviation. This is Elongation factor P from Yersinia pseudotuberculosis serotype O:1b (strain IP 31758).